Consider the following 706-residue polypeptide: DNA ligase (706 aa).

Residues 1-20 form a disordered region; that stretch reads MSATAGTADESGVASAAASA. NAD(+)-binding positions include 50 to 54, 99 to 100, and Glu-128; these read DAEYD and SL. The active-site N6-AMP-lysine intermediate is the Lys-130. Residues Arg-151, Glu-188, Lys-304, and Lys-328 each contribute to the NAD(+) site. Positions 422, 425, 440, and 446 each coordinate Zn(2+). In terms of domain architecture, BRCT spans 604–694; the sequence is EGPRPLDGVT…VDAASKLAVP (91 aa).

It belongs to the NAD-dependent DNA ligase family. LigA subfamily. Mg(2+) serves as cofactor. The cofactor is Mn(2+).

It carries out the reaction NAD(+) + (deoxyribonucleotide)n-3'-hydroxyl + 5'-phospho-(deoxyribonucleotide)m = (deoxyribonucleotide)n+m + AMP + beta-nicotinamide D-nucleotide.. DNA ligase that catalyzes the formation of phosphodiester linkages between 5'-phosphoryl and 3'-hydroxyl groups in double-stranded DNA using NAD as a coenzyme and as the energy source for the reaction. It is essential for DNA replication and repair of damaged DNA. This chain is DNA ligase, found in Frankia casuarinae (strain DSM 45818 / CECT 9043 / HFP020203 / CcI3).